Here is a 412-residue protein sequence, read N- to C-terminus: BSD domain-containing protein 1 (412 aa).

One can recognise a BSD domain in the interval 146–198; the sequence is WLAYWDPEHRKAEISELLVTSPSIRALYTKMVPAAVSHSEFWQRYFYKVHQLE. Basic and acidic residues-rich tracts occupy residues 208 to 219 and 255 to 271; these read KQRADQSVHSEE and HVED…RDHT. 2 disordered regions span residues 208–228 and 255–383; these read KQRA…EEED and HVED…EKDF. The segment covering 272-287 has biased composition (low complexity); it reads SITSPSESSESISPIT. The segment covering 340–351 has biased composition (basic and acidic residues); the sequence is THREDPPSDLRV. The segment covering 355 to 374 has biased composition (polar residues); that stretch reads NSDSGKSTPSNNGQKGSSTD.

The sequence is that of BSD domain-containing protein 1 (bsdc1) from Xenopus tropicalis (Western clawed frog).